The primary structure comprises 421 residues: Odorant receptor 67b (421 aa).

Residues 1–48 lie on the Cytoplasmic side of the membrane; it reads MQDQLDHELERIDKLPKLGLLWVEYSAYALGVNIAPRKRSSKYCRLTR. A helical transmembrane segment spans residues 49–69; it reads ILVLIVNLSIIYSLVAFIMEN. Residues 70–71 are Extracellular-facing; it reads YM. Residues 72–92 form a helical membrane-spanning segment; it reads ISFETYVEAVLLTFQLSVGVV. The Cytoplasmic portion of the chain corresponds to 93-151; sequence KMFHFQNKVESCSQLVFSTETGEVLKSLGLFQLDLPRKKELLSSVSLILLNNWMIIDRQ. Residues 152–172 traverse the membrane as a helical segment; that stretch reads VMFFFKIVCMPVLYYCVRPYF. The Extracellular portion of the chain corresponds to 173 to 217; sequence QYIFDCYIKDKDTCEMTLTYPAIVPYLQLGNYEFPSYVIRFFLLQ. A helical transmembrane segment spans residues 218-238; that stretch reads SGPLWCFFAVFGFNSLFVVLT. Residues 239-289 are Cytoplasmic-facing; that stretch reads RYESGLIKVLRFLVQNSTSDILVPKDQRVKYLQCCVRLFARISSHHNQIEN. Residues 290–310 form a helical membrane-spanning segment; that stretch reads LFKYIILVQCSVSSILICMLL. Residues 311 to 315 are Extracellular-facing; sequence YKIST. Residues 316–336 form a helical membrane-spanning segment; the sequence is VLEVGWVWMGMIMVYFVTIAL. Topologically, residues 337–384 are cytoplasmic; the sequence is EITLYNVSAQKVESQSELLFHDWYNCSWYNESREFKFMIKMMLLFSRR. Residues 385 to 405 form a helical membrane-spanning segment; it reads TFVLSVGGFTSLSHKFLVQVF. The Extracellular portion of the chain corresponds to 406-421; the sequence is RLSANFFLLLRNMNNK.

It belongs to the insect chemoreceptor superfamily. Heteromeric odorant receptor channel (TC 1.A.69) family. Or63a subfamily. In terms of assembly, interacts with Orco. Complexes exist early in the endomembrane system in olfactory sensory neurons (OSNs), coupling these complexes to the conserved ciliary trafficking pathway.

The protein localises to the cell membrane. Its function is as follows. Odorant receptor which mediates acceptance or avoidance behavior, depending on its substrates. The odorant receptor repertoire encodes a large collection of odor stimuli that vary widely in identity, intensity, and duration. May form a complex with Orco to form odorant-sensing units, providing sensitive and prolonged odorant signaling and calcium permeability. Involved in the behavioral responses to ethyl acetate, pentyl acetate, methyl caproate, anisole, heptanal, 2-heptanone, r-carvone, nonanoic acid, and pyrazines. This is Odorant receptor 67b (Or67b) from Drosophila melanogaster (Fruit fly).